Here is a 539-residue protein sequence, read N- to C-terminus: Probable malate:quinone oxidoreductase 3 (539 aa).

Residues 516–539 (LEPPVSPQRPESIRPADSQGVASR) are disordered.

This sequence belongs to the MQO family. The cofactor is FAD.

The catalysed reaction is (S)-malate + a quinone = a quinol + oxaloacetate. It participates in carbohydrate metabolism; tricarboxylic acid cycle; oxaloacetate from (S)-malate (quinone route): step 1/1. The protein is Probable malate:quinone oxidoreductase 3 of Pseudomonas putida (strain ATCC 47054 / DSM 6125 / CFBP 8728 / NCIMB 11950 / KT2440).